A 103-amino-acid polypeptide reads, in one-letter code: Small ribosomal subunit protein uS10 (103 aa).

It belongs to the universal ribosomal protein uS10 family. Part of the 30S ribosomal subunit.

Functionally, involved in the binding of tRNA to the ribosomes. The polypeptide is Small ribosomal subunit protein uS10 (Natranaerobius thermophilus (strain ATCC BAA-1301 / DSM 18059 / JW/NM-WN-LF)).